The primary structure comprises 148 residues: Protein GLUTAMINE DUMPER 3 (148 aa).

A disordered region spans residues 1–24 (MEGRQYYPPRENVEGNRTTMGGGP). At 1–34 (MEGRQYYPPRENVEGNRTTMGGGPHSPWHSPVPY) the chain is on the extracellular side. Residues 35-55 (LFGGLAAMLGLIAFALLILAC) form a helical membrane-spanning segment. The Cytoplasmic segment spans residues 56-148 (SYWRLSGYLD…RSSESNGETH (93 aa)). The short motif at 99–103 (VIMAG) is the VIMAG element. The span at 120 to 132 (CDDDDDEDDDVEG) shows a compositional bias: acidic residues. Residues 120–148 (CDDDDDEDDDVEGSDQVVPRSSESNGETH) form a disordered region. Residues 138–148 (PRSSESNGETH) show a composition bias toward polar residues.

It belongs to the GLUTAMINE DUMPER 1 (TC 9.B.60) family. Expressed in the vascular tissues. Also detected in anthers.

Its subcellular location is the membrane. Functionally, probable subunit of an amino acid transporter involved in the regulation of the amino acid metabolism. Stimulates amino acid export by activating nonselective amino acid facilitators. Acts upstream genes involved in the salicylic acid (SA) pathway and in the geminivirus-host interaction. The sequence is that of Protein GLUTAMINE DUMPER 3 (GDU3) from Arabidopsis thaliana (Mouse-ear cress).